Reading from the N-terminus, the 170-residue chain is ATP synthase subunit b (170 aa).

Residues 22–44 (IINLAVVVFGLYKFLPGFLGKIL) form a helical membrane-spanning segment.

This sequence belongs to the ATPase B chain family. F-type ATPases have 2 components, F(1) - the catalytic core - and F(0) - the membrane proton channel. F(1) has five subunits: alpha(3), beta(3), gamma(1), delta(1), epsilon(1). F(0) has four main subunits: a(1), b(1), b'(1) and c(10-14). The alpha and beta chains form an alternating ring which encloses part of the gamma chain. F(1) is attached to F(0) by a central stalk formed by the gamma and epsilon chains, while a peripheral stalk is formed by the delta, b and b' chains.

Its subcellular location is the cellular thylakoid membrane. In terms of biological role, f(1)F(0) ATP synthase produces ATP from ADP in the presence of a proton or sodium gradient. F-type ATPases consist of two structural domains, F(1) containing the extramembraneous catalytic core and F(0) containing the membrane proton channel, linked together by a central stalk and a peripheral stalk. During catalysis, ATP synthesis in the catalytic domain of F(1) is coupled via a rotary mechanism of the central stalk subunits to proton translocation. Component of the F(0) channel, it forms part of the peripheral stalk, linking F(1) to F(0). This is ATP synthase subunit b from Prochlorococcus marinus (strain NATL1A).